The chain runs to 402 residues: S-adenosylmethionine synthase (402 aa).

H15 contributes to the ATP binding site. D17 is a Mg(2+) binding site. E43 contributes to the K(+) binding site. Residues E56 and Q99 each coordinate L-methionine. The tract at residues 99–109 (QSPDIAQGVDT) is flexible loop. Residues 174–176 (DGK), 247–248 (RF), D256, 262–263 (RK), A279, and K283 contribute to the ATP site. D256 provides a ligand contact to L-methionine. K287 provides a ligand contact to L-methionine.

The protein belongs to the AdoMet synthase family. In terms of assembly, homotetramer; dimer of dimers. It depends on Mg(2+) as a cofactor. K(+) serves as cofactor.

It localises to the cytoplasm. The catalysed reaction is L-methionine + ATP + H2O = S-adenosyl-L-methionine + phosphate + diphosphate. The protein operates within amino-acid biosynthesis; S-adenosyl-L-methionine biosynthesis; S-adenosyl-L-methionine from L-methionine: step 1/1. Catalyzes the formation of S-adenosylmethionine (AdoMet) from methionine and ATP. The overall synthetic reaction is composed of two sequential steps, AdoMet formation and the subsequent tripolyphosphate hydrolysis which occurs prior to release of AdoMet from the enzyme. This is S-adenosylmethionine synthase from Streptomyces avermitilis (strain ATCC 31267 / DSM 46492 / JCM 5070 / NBRC 14893 / NCIMB 12804 / NRRL 8165 / MA-4680).